A 122-amino-acid polypeptide reads, in one-letter code: Small ribosomal subunit protein uS13 (122 aa).

The interval 95-122 (GLPVRGQRTHTNARTRKGKAKPIAGKKK) is disordered.

Belongs to the universal ribosomal protein uS13 family. In terms of assembly, part of the 30S ribosomal subunit. Forms a loose heterodimer with protein S19. Forms two bridges to the 50S subunit in the 70S ribosome.

In terms of biological role, located at the top of the head of the 30S subunit, it contacts several helices of the 16S rRNA. In the 70S ribosome it contacts the 23S rRNA (bridge B1a) and protein L5 of the 50S subunit (bridge B1b), connecting the 2 subunits; these bridges are implicated in subunit movement. Contacts the tRNAs in the A and P-sites. This chain is Small ribosomal subunit protein uS13, found in Zymomonas mobilis subsp. mobilis (strain ATCC 31821 / ZM4 / CP4).